A 546-amino-acid chain; its full sequence is Crossover junction endonuclease EME1A (546 aa).

Disordered regions lie at residues 1-55 (MSDF…FLDE) and 88-232 (VISL…REKQ). Residues 28–49 (PTDLNLDTEPSLQKQPPGSAST) are compositionally biased toward polar residues. 2 stretches are compositionally biased toward basic and acidic residues: residues 103-120 (SSKK…KPCR) and 149-167 (DAIE…VEKM). The span at 173-183 (TITSKSTSLSA) shows a compositional bias: polar residues. A coiled-coil region spans residues 188-245 (KKKMSKDEKTRAAEEKKLQKEQEKLQKAASKAEDAEHKKLEREKQKWAKEKDKALKCI). A compositionally biased stretch (basic and acidic residues) spans 192 to 232 (SKDEKTRAAEEKKLQKEQEKLQKAASKAEDAEHKKLEREKQ). The 201-residue stretch at 278-478 (NPIQRSIVWT…PSLKSLLKVY (201 aa)) folds into the ERCC4 domain.

It belongs to the EME1/MMS4 family. Forms a heterodimer with MUS81. Requires Mg(2+) as cofactor. The cofactor is Ca(2+).

Its subcellular location is the nucleus. Its function is as follows. Interacts with MUS81 to form a DNA structure-specific endonuclease with substrate preference for branched DNA structures with a 5'-end at the branch nick. Typical substrates include 3'-flap structures, D-loops, replication forks, nicked Holliday junctions and also intact Holliday junctions with a reduced efficiency. May be required in mitosis for the processing of stalled or collapsed replication fork intermediates. Plays a role in DNA repair and in genotoxic stress-induced homologous recombination (HR) in somatic cells. Mediates a subset of meiotic recombination events that are insensitive to crossover interference. The protein is Crossover junction endonuclease EME1A (EME1A) of Arabidopsis thaliana (Mouse-ear cress).